Consider the following 301-residue polypeptide: HTH-type transcriptional regulator EstR (301 aa).

An HTH lysR-type domain is found at 5-62; it reads PSLRQLSYLVTLSETLHFTEAARRSFVTQSTLSGGIMELERLLGGVLVERDRQNVRLT. Positions 22–41 form a DNA-binding region, H-T-H motif; it reads FTEAARRSFVTQSTLSGGIM.

It belongs to the LysR transcriptional regulatory family.

Functionally, transcriptional regulator of the esterase operon. This Acinetobacter baylyi (strain ATCC 33305 / BD413 / ADP1) protein is HTH-type transcriptional regulator EstR (estR).